A 1163-amino-acid chain; its full sequence is Hamartin (1163 aa).

Residue lysine 30 forms a Glycyl lysine isopeptide (Lys-Gly) (interchain with G-Cter in ubiquitin) linkage. The segment covering serine 295–arginine 316 has biased composition (polar residues). Disordered stretches follow at residues serine 295 to proline 337 and cysteine 353 to valine 594. Residues serine 321–proline 337 show a composition bias toward low complexity. The span at threonine 393–proline 402 shows a compositional bias: pro residues. The segment at glutamine 403–glutamate 787 is mediates interaction with WDR45B. The span at glutamate 474–serine 487 shows a compositional bias: basic and acidic residues. Phosphoserine occurs at positions 487, 505, 511, 521, 595, and 598. Over residues leucine 512–serine 530 the composition is skewed to polar residues. Coiled-coil stretches lie at residues arginine 721–lysine 919 and glutamate 970–aspartate 994. A compositionally biased stretch (basic and acidic residues) spans asparagine 1008–threonine 1020. The disordered stretch occupies residues asparagine 1008–serine 1163. A compositionally biased stretch (low complexity) spans serine 1029 to serine 1046. Positions glutamate 1066–serine 1083 are enriched in polar residues. Positions lysine 1088 to serine 1099 are enriched in basic and acidic residues. Serine 1097 carries the phosphoserine modification. Residues proline 1131–serine 1146 are compositionally biased toward low complexity. Over residues aspartate 1154–serine 1163 the composition is skewed to basic and acidic residues.

In terms of assembly, component of the TSC-TBC complex (also named Rhebulator complex), composed of 2 molecules of TSC1, 2 molecules of TSC2 and 1 molecule of TBC1D7. Probably forms a complex composed of chaperones HSP90 and HSP70, co-chaperones STIP1/HOP, CDC37, PPP5C, PTGES3/p23, TSC1 and client protein TSC2. Forms a complex composed of chaperones HSP90 and HSP70, co-chaperones CDC37, PPP5C, TSC1 and client protein TSC2, CDK4, AKT, RAF1 and NR3C1; this complex does not contain co-chaperones STIP1/HOP and PTGES3/p23. Forms a complex containing HSP90AA1, TSC1 and TSC2; TSC1 is required to recruit TCS2 to the complex. Interacts (via C-terminus) with the closed form of HSP90AA1 (via the middle domain and TPR repeat-binding motif). Interacts with DOCK7. Interacts with FBXW5. Interacts with WDR45B. Interacts with RPAP3 and URI1. Post-translationally, phosphorylation at Ser-505 does not affect interaction with TSC2. 'Lys-63'-linked ubiquitinated at Lys-30 by PELI1; the ubiquitination promotes TSC1/TSC2 complex stability. Highly expressed in brain, spleen and kidney, followed by liver and heart.

The protein localises to the lysosome membrane. It localises to the cytoplasm. Its subcellular location is the cytosol. In terms of biological role, non-catalytic component of the TSC-TBC complex, a multiprotein complex that acts as a negative regulator of the canonical mTORC1 complex, an evolutionarily conserved central nutrient sensor that stimulates anabolic reactions and macromolecule biosynthesis to promote cellular biomass generation and growth. The TSC-TBC complex acts as a GTPase-activating protein (GAP) for the small GTPase RHEB, a direct activator of the protein kinase activity of mTORC1. In absence of nutrients, the TSC-TBC complex inhibits mTORC1, thereby preventing phosphorylation of ribosomal protein S6 kinase (RPS6KB1 and RPS6KB2) and EIF4EBP1 (4E-BP1) by the mTORC1 signaling. The TSC-TBC complex is inactivated in response to nutrients, relieving inhibition of mTORC1. Within the TSC-TBC complex, TSC1 stabilizes TSC2 and prevents TSC2 self-aggregation. Involved in microtubule-mediated protein transport via its ability to regulate mTORC1 signaling. Also acts as a co-chaperone for HSP90AA1 facilitating HSP90AA1 chaperoning of protein clients such as kinases, TSC2 and glucocorticoid receptor NR3C1. Increases ATP binding to HSP90AA1 and inhibits HSP90AA1 ATPase activity. Competes with the activating co-chaperone AHSA1 for binding to HSP90AA1, thereby providing a reciprocal regulatory mechanism for chaperoning of client proteins. Recruits TSC2 to HSP90AA1 and stabilizes TSC2 by preventing the interaction between TSC2 and ubiquitin ligase HERC1. This is Hamartin from Rattus norvegicus (Rat).